Here is a 429-residue protein sequence, read N- to C-terminus: Sex determination protein fox-1 (429 aa).

Residues 156-180 (ATTAGSTNGSAAVTQPDPSTSSGPD) are compositionally biased toward low complexity. Residues 156–188 (ATTAGSTNGSAAVTQPDPSTSSGPDGPKRLHVS) are disordered. The RRM domain occupies 183–259 (KRLHVSNIPF…RKIEVNCATA (77 aa)).

As to quaternary structure, interacts with sup-12. In terms of tissue distribution, in males and hermaphrodites expressed in a subset of cells in the head and tail. Expressed in the pharynx, intestine and in muscles from the vulva and body wall.

Its subcellular location is the nucleus. Functionally, RNA-binding protein that regulates tissue-specific alternative splicing events by binding to 5'-UGCAUG-3' and 5'-GCACG-3' elements. Also binds to poly(A), poly(G), poly(C), or poly(U) stretches of RNA. Plays a role in the sex determination pathway and X chromosome dosage compensation, and together with sex-1 is involved in making the distinction between one and two X-chromosomes. Binds to 5'-GCAUG-3' and 5'-GCACG-3' elements in intron 6 of the pre-mRNA of the sex-determining factor xol-1 to promote its alternative splicing and together with sex-1 negatively regulates the expression of xol-1 to promote hermaphrodite development. Negatively regulates the expression of the active isoform of xol-1 (isoform b) by promoting intron 6 retention and the deletion of exon 7 coding sequences in hermaphrodite embryos. Furthermore, binding to the pre-mRNA of xol-1 can also direct the use of an alternative 3' splice site enabling the xol-1 transcript to be trans-spliced to unrelated genes on chromosome 2, which also leads to xol-1 exon 7 deletion. Does not seem to regulate the retention of introns 1 to 5 of xol-1 pre-mRNA. Plays a role in the association of the dosage compensation complex proteins dpy-27 and sdc-3 with the hermaphrodite X chromosomes. Binds to 5'-UGCAUG-3' elements in intron 7 of the pre-mRNA of unc-32 to promote its alternative splicing in neuronal tissues. Binds to 5'-UGCAUG-3' elements in intron 4 of the pre-mRNA of egl-15 to promote its alternative splicing in body wall muscle tissues. Promotes binding of RNA-binding protein sup-12 to target RNA. Plays a role in male mating behavior. This is Sex determination protein fox-1 from Caenorhabditis elegans.